The sequence spans 236 residues: (5-formylfuran-3-yl)methyl phosphate synthase (236 aa).

Residue K27 is the Schiff-base intermediate with substrate of the active site. Catalysis depends on K85, which acts as the Proton acceptor.

This sequence belongs to the MfnB family.

It catalyses the reaction 2 D-glyceraldehyde 3-phosphate = 4-(hydroxymethyl)-2-furancarboxaldehyde phosphate + phosphate + 2 H2O. Its pathway is cofactor biosynthesis; methanofuran biosynthesis. Catalyzes the formation of 4-(hydroxymethyl)-2-furancarboxaldehyde phosphate (4-HFC-P) from two molecules of glyceraldehyde-3-P (GA-3-P). In Methanothermobacter thermautotrophicus (strain ATCC 29096 / DSM 1053 / JCM 10044 / NBRC 100330 / Delta H) (Methanobacterium thermoautotrophicum), this protein is (5-formylfuran-3-yl)methyl phosphate synthase.